A 319-amino-acid polypeptide reads, in one-letter code: Aspartate carbamoyltransferase catalytic subunit (319 aa).

The carbamoyl phosphate site is built by arginine 57 and threonine 58. L-aspartate is bound at residue lysine 85. Positions 107, 135, and 138 each coordinate carbamoyl phosphate. L-aspartate-binding residues include arginine 168 and arginine 222. 2 residues coordinate carbamoyl phosphate: glycine 263 and proline 264.

This sequence belongs to the aspartate/ornithine carbamoyltransferase superfamily. ATCase family. In terms of assembly, heterododecamer (2C3:3R2) of six catalytic PyrB chains organized as two trimers (C3), and six regulatory PyrI chains organized as three dimers (R2).

It catalyses the reaction carbamoyl phosphate + L-aspartate = N-carbamoyl-L-aspartate + phosphate + H(+). It functions in the pathway pyrimidine metabolism; UMP biosynthesis via de novo pathway; (S)-dihydroorotate from bicarbonate: step 2/3. Its function is as follows. Catalyzes the condensation of carbamoyl phosphate and aspartate to form carbamoyl aspartate and inorganic phosphate, the committed step in the de novo pyrimidine nucleotide biosynthesis pathway. This Paracoccus denitrificans (strain Pd 1222) protein is Aspartate carbamoyltransferase catalytic subunit.